The sequence spans 565 residues: CTP synthase (565 aa).

Residues 1 to 268 form an amidoligase domain region; sequence MQTKYIFVTG…GELVVDRFYP (268 aa). Serine 14 contributes to the CTP binding site. Position 14 (serine 14) interacts with UTP. ATP is bound at residue 15-20; the sequence is SLGKGI. Tyrosine 55 is an L-glutamine binding site. Residue aspartate 72 participates in ATP binding. Positions 72 and 142 each coordinate Mg(2+). Residues 149–151, 189–194, and lysine 225 contribute to the CTP site; these read DIE and KTKPTQ. UTP contacts are provided by residues 189 to 194 and lysine 225; that span reads KTKPTQ. One can recognise a Glutamine amidotransferase type-1 domain in the interval 301 to 543; it reads PIALVGKYVE…VRACTAYAHE (243 aa). Glycine 363 contributes to the L-glutamine binding site. Cysteine 390 serves as the catalytic Nucleophile; for glutamine hydrolysis. L-glutamine is bound by residues 391–394, glutamate 414, and arginine 471; that span reads LGLQ. Active-site residues include histidine 516 and glutamate 518. Residues 545-565 form a disordered region; it reads DLVTSPQPPERKAVPLASVDM.

This sequence belongs to the CTP synthase family. Homotetramer.

It carries out the reaction UTP + L-glutamine + ATP + H2O = CTP + L-glutamate + ADP + phosphate + 2 H(+). The enzyme catalyses L-glutamine + H2O = L-glutamate + NH4(+). It catalyses the reaction UTP + NH4(+) + ATP = CTP + ADP + phosphate + 2 H(+). It participates in pyrimidine metabolism; CTP biosynthesis via de novo pathway; CTP from UDP: step 2/2. Allosterically activated by GTP, when glutamine is the substrate; GTP has no effect on the reaction when ammonia is the substrate. The allosteric effector GTP functions by stabilizing the protein conformation that binds the tetrahedral intermediate(s) formed during glutamine hydrolysis. Inhibited by the product CTP, via allosteric rather than competitive inhibition. In terms of biological role, catalyzes the ATP-dependent amination of UTP to CTP with either L-glutamine or ammonia as the source of nitrogen. Regulates intracellular CTP levels through interactions with the four ribonucleotide triphosphates. The sequence is that of CTP synthase from Salinibacter ruber (strain DSM 13855 / M31).